Consider the following 142-residue polypeptide: Small ribosomal subunit protein uS12y (142 aa).

Position 61 is a hydroxyproline (Pro61).

This sequence belongs to the universal ribosomal protein uS12 family.

This chain is Small ribosomal subunit protein uS12y (RPS23B), found in Arabidopsis thaliana (Mouse-ear cress).